The sequence spans 246 residues: tRNA (guanine-N(1)-)-methyltransferase (246 aa).

S-adenosyl-L-methionine contacts are provided by residues G113 and 133–138 (IGDYVL).

Belongs to the RNA methyltransferase TrmD family. Homodimer.

The protein resides in the cytoplasm. The enzyme catalyses guanosine(37) in tRNA + S-adenosyl-L-methionine = N(1)-methylguanosine(37) in tRNA + S-adenosyl-L-homocysteine + H(+). In terms of biological role, specifically methylates guanosine-37 in various tRNAs. The sequence is that of tRNA (guanine-N(1)-)-methyltransferase from Haemophilus influenzae (strain PittGG).